The sequence spans 132 residues: Small ribosomal subunit protein uS8 (132 aa).

Belongs to the universal ribosomal protein uS8 family. As to quaternary structure, part of the 30S ribosomal subunit. Contacts proteins S5 and S12.

One of the primary rRNA binding proteins, it binds directly to 16S rRNA central domain where it helps coordinate assembly of the platform of the 30S subunit. The protein is Small ribosomal subunit protein uS8 of Leifsonia xyli subsp. xyli (strain CTCB07).